We begin with the raw amino-acid sequence, 199 residues long: Recombination protein RecR (199 aa).

The C4-type zinc finger occupies 57-72 (CSICGNFTDRDPCRLC). One can recognise a Toprim domain in the interval 80–175 (SCICVVEEAR…KVTRLAYGLP (96 aa)).

It belongs to the RecR family.

Its function is as follows. May play a role in DNA repair. It seems to be involved in an RecBC-independent recombinational process of DNA repair. It may act with RecF and RecO. This chain is Recombination protein RecR, found in Moorella thermoacetica (strain ATCC 39073 / JCM 9320).